Reading from the N-terminus, the 148-residue chain is SsrA-binding protein (148 aa).

Basic and acidic residues predominate over residues 127 to 142 (KRESEKERDWERDKAR). The tract at residues 127-148 (KRESEKERDWERDKARLMRVKT) is disordered.

This sequence belongs to the SmpB family.

Its subcellular location is the cytoplasm. In terms of biological role, required for rescue of stalled ribosomes mediated by trans-translation. Binds to transfer-messenger RNA (tmRNA), required for stable association of tmRNA with ribosomes. tmRNA and SmpB together mimic tRNA shape, replacing the anticodon stem-loop with SmpB. tmRNA is encoded by the ssrA gene; the 2 termini fold to resemble tRNA(Ala) and it encodes a 'tag peptide', a short internal open reading frame. During trans-translation Ala-aminoacylated tmRNA acts like a tRNA, entering the A-site of stalled ribosomes, displacing the stalled mRNA. The ribosome then switches to translate the ORF on the tmRNA; the nascent peptide is terminated with the 'tag peptide' encoded by the tmRNA and targeted for degradation. The ribosome is freed to recommence translation, which seems to be the essential function of trans-translation. This Aromatoleum aromaticum (strain DSM 19018 / LMG 30748 / EbN1) (Azoarcus sp. (strain EbN1)) protein is SsrA-binding protein.